Reading from the N-terminus, the 673-residue chain is DNA ligase (673 aa).

NAD(+)-binding positions include 33–37, 83–84, and Glu117; these read DHQYD and SL. Lys119 acts as the N6-AMP-lysine intermediate in catalysis. NAD(+)-binding residues include Arg140, Glu175, Lys282, and Lys306. Residues Cys400, Cys403, Cys418, and Cys424 each coordinate Zn(2+). Residues 592 to 673 enclose the BRCT domain; it reads RGSSAISGKT…WVKMVEDARS (82 aa).

Belongs to the NAD-dependent DNA ligase family. LigA subfamily. Mg(2+) serves as cofactor. Requires Mn(2+) as cofactor.

It catalyses the reaction NAD(+) + (deoxyribonucleotide)n-3'-hydroxyl + 5'-phospho-(deoxyribonucleotide)m = (deoxyribonucleotide)n+m + AMP + beta-nicotinamide D-nucleotide.. Functionally, DNA ligase that catalyzes the formation of phosphodiester linkages between 5'-phosphoryl and 3'-hydroxyl groups in double-stranded DNA using NAD as a coenzyme and as the energy source for the reaction. It is essential for DNA replication and repair of damaged DNA. This is DNA ligase from Anaplasma marginale (strain St. Maries).